We begin with the raw amino-acid sequence, 465 residues long: Cysteine--tRNA ligase (465 aa).

Cys-27 is a binding site for Zn(2+). Residues 29–39 carry the 'HIGH' region motif; that stretch reads PTTYNYIHIGN. The Zn(2+) site is built by Cys-207, His-232, and Glu-236. Residues 264–268 carry the 'KMSKS' region motif; the sequence is KMSKS. Lys-267 serves as a coordination point for ATP.

Belongs to the class-I aminoacyl-tRNA synthetase family. In terms of assembly, monomer. Zn(2+) serves as cofactor.

The protein resides in the cytoplasm. The enzyme catalyses tRNA(Cys) + L-cysteine + ATP = L-cysteinyl-tRNA(Cys) + AMP + diphosphate. The protein is Cysteine--tRNA ligase of Carboxydothermus hydrogenoformans (strain ATCC BAA-161 / DSM 6008 / Z-2901).